The primary structure comprises 440 residues: 3-phosphoshikimate 1-carboxyvinyltransferase (440 aa).

3-phosphoshikimate-binding residues include Lys-26, Ser-27, and Arg-31. Lys-26 contacts phosphoenolpyruvate. 2 residues coordinate phosphoenolpyruvate: Gly-100 and Arg-134. 3-phosphoshikimate-binding residues include Ser-180, Ser-181, Gln-182, Ser-208, Asp-323, Asn-346, and Lys-350. Gln-182 contacts phosphoenolpyruvate. Catalysis depends on Asp-323, which acts as the Proton acceptor. Residues Arg-354, Arg-398, and Lys-423 each contribute to the phosphoenolpyruvate site.

The protein belongs to the EPSP synthase family. As to quaternary structure, monomer.

It is found in the cytoplasm. It catalyses the reaction 3-phosphoshikimate + phosphoenolpyruvate = 5-O-(1-carboxyvinyl)-3-phosphoshikimate + phosphate. Its pathway is metabolic intermediate biosynthesis; chorismate biosynthesis; chorismate from D-erythrose 4-phosphate and phosphoenolpyruvate: step 6/7. Functionally, catalyzes the transfer of the enolpyruvyl moiety of phosphoenolpyruvate (PEP) to the 5-hydroxyl of shikimate-3-phosphate (S3P) to produce enolpyruvyl shikimate-3-phosphate and inorganic phosphate. The protein is 3-phosphoshikimate 1-carboxyvinyltransferase of Pasteurella multocida (strain Pm70).